The chain runs to 461 residues: tRNA modification GTPase MnmE (461 aa).

(6S)-5-formyl-5,6,7,8-tetrahydrofolate is bound by residues R27, E89, and R128. One can recognise a TrmE-type G domain in the interval G224–F382. N234 is a binding site for K(+). Residues N234–S239, T253–T259, and D278–G281 contribute to the GTP site. A Mg(2+)-binding site is contributed by S238. Residues T253, V255, and T258 each coordinate K(+). T259 lines the Mg(2+) pocket. Position 461 (K461) interacts with (6S)-5-formyl-5,6,7,8-tetrahydrofolate.

The protein belongs to the TRAFAC class TrmE-Era-EngA-EngB-Septin-like GTPase superfamily. TrmE GTPase family. As to quaternary structure, homodimer. Heterotetramer of two MnmE and two MnmG subunits. Requires K(+) as cofactor.

The protein resides in the cytoplasm. In terms of biological role, exhibits a very high intrinsic GTPase hydrolysis rate. Involved in the addition of a carboxymethylaminomethyl (cmnm) group at the wobble position (U34) of certain tRNAs, forming tRNA-cmnm(5)s(2)U34. The protein is tRNA modification GTPase MnmE of Lactobacillus delbrueckii subsp. bulgaricus (strain ATCC BAA-365 / Lb-18).